Consider the following 104-residue polypeptide: Large ribosomal subunit protein uL24 (104 aa).

It belongs to the universal ribosomal protein uL24 family. In terms of assembly, part of the 50S ribosomal subunit.

In terms of biological role, one of two assembly initiator proteins, it binds directly to the 5'-end of the 23S rRNA, where it nucleates assembly of the 50S subunit. Its function is as follows. One of the proteins that surrounds the polypeptide exit tunnel on the outside of the subunit. In Bartonella henselae (strain ATCC 49882 / DSM 28221 / CCUG 30454 / Houston 1) (Rochalimaea henselae), this protein is Large ribosomal subunit protein uL24.